The chain runs to 353 residues: Methylthioribose-1-phosphate isomerase (353 aa).

Substrate contacts are provided by residues 51 to 53 (RGA), arginine 94, and glutamine 199. Aspartate 240 acts as the Proton donor in catalysis. 250–251 (NK) contributes to the substrate binding site.

This sequence belongs to the eIF-2B alpha/beta/delta subunits family. MtnA subfamily. Homodimer.

It catalyses the reaction 5-(methylsulfanyl)-alpha-D-ribose 1-phosphate = 5-(methylsulfanyl)-D-ribulose 1-phosphate. It participates in amino-acid biosynthesis; L-methionine biosynthesis via salvage pathway; L-methionine from S-methyl-5-thio-alpha-D-ribose 1-phosphate: step 1/6. Its function is as follows. Catalyzes the interconversion of methylthioribose-1-phosphate (MTR-1-P) into methylthioribulose-1-phosphate (MTRu-1-P). The sequence is that of Methylthioribose-1-phosphate isomerase from Bacillus velezensis (strain DSM 23117 / BGSC 10A6 / LMG 26770 / FZB42) (Bacillus amyloliquefaciens subsp. plantarum).